Reading from the N-terminus, the 308-residue chain is MMIMEYVIETENLTKQYGETTVVNKINLHVPKGKIYGLLGRNGAGKTTAMKMMLQLAFPTDGTVRLFGTNYKENIHTLYSKVGSIIETPGFYSNLTGYENLQILAKLRGGVSKSGVEKALEVVGLHKEKRKVFSDYSLGMKQRLGIAAAIMHEPELLILDEPINGLDPIGISEIRSFLSKLSHENGTTIFISSHVLSEIEQIADVIGVMHEGHLVEEVNISELHKRNRKYTEFDVSDGKIAAKILESSYHMTDFTVQDGTIRIYDFSQSVGEINREFARNGLLITRINDSEENLEDYFSKLIGGGGIA.

Positions 8–236 (IETENLTKQY…NRKYTEFDVS (229 aa)) constitute an ABC transporter domain. 40–47 (GRNGAGKT) contacts ATP.

This sequence belongs to the ABC transporter superfamily. The complex is probably composed of two ATP-binding proteins (BcrA) and two transmembrane proteins (BcrB).

Its function is as follows. Essential for high-level bacitracin resistance. Part of the ABC transporter complex BcrAB. Probably responsible for energy coupling to the transport system. In Enterococcus faecalis (Streptococcus faecalis), this protein is Bacitracin transport ATP-binding protein BcrA.